The primary structure comprises 158 residues: GTP-dependent dephospho-CoA kinase (158 aa).

The GTP site is built by D35, V36, D54, K56, E109, and D132.

The protein belongs to the GTP-dependent DPCK family.

It catalyses the reaction 3'-dephospho-CoA + GTP = GDP + CoA + H(+). Its pathway is cofactor biosynthesis; coenzyme A biosynthesis. In terms of biological role, catalyzes the GTP-dependent phosphorylation of the 3'-hydroxyl group of dephosphocoenzyme A to form coenzyme A (CoA). This Methanococcus maripaludis (strain DSM 14266 / JCM 13030 / NBRC 101832 / S2 / LL) protein is GTP-dependent dephospho-CoA kinase.